The chain runs to 117 residues: Large ribosomal subunit protein bL20 (117 aa).

This sequence belongs to the bacterial ribosomal protein bL20 family.

Functionally, binds directly to 23S ribosomal RNA and is necessary for the in vitro assembly process of the 50S ribosomal subunit. It is not involved in the protein synthesizing functions of that subunit. This Trichlorobacter lovleyi (strain ATCC BAA-1151 / DSM 17278 / SZ) (Geobacter lovleyi) protein is Large ribosomal subunit protein bL20.